The following is a 182-amino-acid chain: NADH-quinone oxidoreductase subunit C 2 (182 aa).

The disordered stretch occupies residues 153 to 182 (YKDKLNPFGAEGPPPTQPDLATNDIPQGGR).

This sequence belongs to the complex I 30 kDa subunit family. As to quaternary structure, NDH-1 is composed of 14 different subunits. Subunits NuoB, C, D, E, F, and G constitute the peripheral sector of the complex.

It localises to the cell inner membrane. The catalysed reaction is a quinone + NADH + 5 H(+)(in) = a quinol + NAD(+) + 4 H(+)(out). NDH-1 shuttles electrons from NADH, via FMN and iron-sulfur (Fe-S) centers, to quinones in the respiratory chain. The immediate electron acceptor for the enzyme in this species is believed to be ubiquinone. Couples the redox reaction to proton translocation (for every two electrons transferred, four hydrogen ions are translocated across the cytoplasmic membrane), and thus conserves the redox energy in a proton gradient. This chain is NADH-quinone oxidoreductase subunit C 2, found in Rhizobium meliloti (strain 1021) (Ensifer meliloti).